The sequence spans 475 residues: Early growth response protein 1-B (475 aa).

Disordered regions lie at residues 109-180 (NVSS…TASI) and 264-285 (PSRM…RPYA). Residues 111-140 (SSSSAPSSSPSSSSSSSSSSSSQSPPLSCS) are compositionally biased toward low complexity. The segment covering 170 to 179 (QPFQNASTAS) has biased composition (polar residues). C2H2-type zinc fingers lie at residues 284 to 308 (YACP…IRIH), 314 to 336 (FQCR…IRTH), and 342 to 364 (FACD…TKIH). The segment at 355-379 (DERKRHTKIHLRQKDKKADKATPVS) is disordered. Over residues 359-369 (RHTKIHLRQKD) the composition is skewed to basic residues.

Belongs to the EGR C2H2-type zinc-finger protein family.

The protein resides in the nucleus. It localises to the cytoplasm. In terms of biological role, transcriptional regulator. Recognizes and binds to the DNA sequence 5'-GCG(T/G)GGGCG-3'(EGR-site) in the promoter region of target genes. Binds double-stranded target DNA, irrespective of the cytosine methylation status. Regulates the transcription of numerous target genes, and thereby plays an important role in regulating the response to growth factors, DNA damage, and ischemia. Plays a role in the regulation of cell survival, proliferation and cell death. Mediates responses to ischemia and hypoxia; regulates the expression of proteins that are involved in inflammatory processes. Plays a role in regulating the expression of circadian clock genes. This is Early growth response protein 1-B (egr1-b) from Xenopus laevis (African clawed frog).